We begin with the raw amino-acid sequence, 880 residues long: DNA-directed RNA polymerase subunit Rpo1N (880 aa).

8 residues coordinate Zn(2+): Cys-58, Cys-61, Cys-68, His-71, Cys-98, Cys-101, Cys-146, and Cys-149. Mg(2+)-binding residues include Asp-456, Asp-458, and Asp-460. Arg-573, Cys-575, Cys-580, His-582, and Ser-584 together coordinate Zn(2+).

It belongs to the RNA polymerase beta' chain family. In terms of assembly, part of the 13-subunit RNA polymerase complex. Interacts with TFS4. (Microbial infection) Binds viral protein RIP, which blocks global transcription. Mg(2+) is required as a cofactor. Requires Zn(2+) as cofactor.

The protein resides in the cytoplasm. The enzyme catalyses RNA(n) + a ribonucleoside 5'-triphosphate = RNA(n+1) + diphosphate. With respect to regulation, (Microbial infection) Binds to viral protein RIP (AC Q3V4R7), which inhibits global transcription. Its function is as follows. DNA-dependent RNA polymerase (RNAP) catalyzes the transcription of DNA into RNA using the four ribonucleoside triphosphates as substrates. Forms the clamp head domain. The sequence is that of DNA-directed RNA polymerase subunit Rpo1N from Sulfolobus acidocaldarius (strain ATCC 33909 / DSM 639 / JCM 8929 / NBRC 15157 / NCIMB 11770).